A 507-amino-acid polypeptide reads, in one-letter code: Cell cycle serine/threonine-protein kinase hsk1 (507 aa).

S22 is subject to Phosphoserine. The region spanning 68-433 (YRLIEKIGEG…AEEALDHDFL (366 aa)) is the Protein kinase domain. Residues 74 to 82 (IGEGTFSSV) and K129 contribute to the ATP site. The active-site Proton acceptor is D216. Position 291 is a phosphothreonine (T291). The disordered stretch occupies residues 475 to 507 (FKEQEETDEPTSLSKRKRSIDEILPNDALQDGA). Position 493 is a phosphoserine (S493).

It belongs to the protein kinase superfamily. Ser/Thr protein kinase family. CDC7 subfamily. In terms of assembly, heterodimer with the regulatory subunit him1/dfp1. May form homooligomeric complexes. Interacts with mcm10. Autophosphorylated. Phosphorylated by cds1 in vitro.

Its subcellular location is the nucleus. It carries out the reaction L-seryl-[protein] + ATP = O-phospho-L-seryl-[protein] + ADP + H(+). It catalyses the reaction L-threonyl-[protein] + ATP = O-phospho-L-threonyl-[protein] + ADP + H(+). Its activity is regulated as follows. Phosphorylation of exogenous substrates activated by Dfp1. Functionally, required for G1/S transition. Plays a role in DNA replication checkpoint signaling through regulating rad3 and cds1. Involved in the maintenance of mitotic chromosome structures during S phase through regulating the function of rad21. Required for initiation of mitotic DNA replication through phosphorylating mcm2/cdc19. Required for genome integrity. This Schizosaccharomyces pombe (strain 972 / ATCC 24843) (Fission yeast) protein is Cell cycle serine/threonine-protein kinase hsk1 (hsk1).